Reading from the N-terminus, the 507-residue chain is Steroid (22S)-hydroxylase (507 aa).

A helical membrane pass occupies residues 12–32; that stretch reads LLFFLPYILLALLTFYTTTVA. Cys444 provides a ligand contact to heme.

This sequence belongs to the cytochrome P450 family. It depends on heme as a cofactor.

It is found in the membrane. The catalysed reaction is a C27-steroid + reduced [NADPH--hemoprotein reductase] + O2 = a (22S)-22-hydroxy C27-steroid + oxidized [NADPH--hemoprotein reductase] + H2O + H(+). It carries out the reaction a C28-steroid + reduced [NADPH--hemoprotein reductase] + O2 = a (22S)-22-hydroxy C28-steroid + oxidized [NADPH--hemoprotein reductase] + H2O + H(+). The enzyme catalyses campesterol + reduced [NADPH--hemoprotein reductase] + O2 = (22S)-22-hydroxycampesterol + oxidized [NADPH--hemoprotein reductase] + H2O + H(+). It catalyses the reaction campestanol + reduced [NADPH--hemoprotein reductase] + O2 = 6-deoxycathasterone + oxidized [NADPH--hemoprotein reductase] + H2O + H(+). It participates in plant hormone biosynthesis; brassinosteroid biosynthesis. Its function is as follows. Involved in reduction steps of the biosynthesis of plant campesterol-derivative steroids, ending to castasterone (CS) but missing brassinolide (BL). Catalyzes the conversion of campesterol (CR) to (22S)-22-hydroxycampesterol (22-OHCR, 22-hydroxyCR) and of campestanol (CN) to 6-deoxycathasterone (6-deoxoCT). The chain is Steroid (22S)-hydroxylase from Brachypodium distachyon (Purple false brome).